The primary structure comprises 506 residues: Zinc finger and SCAN domain containing protein 4D (506 aa).

Residues 37 to 119 (SAQLNFSPSN…RFMESLTDEC (83 aa)) enclose the SCAN box domain. The interval 238–264 (SQGNSSHHVDFRSAPTPADVPMEEQPK) is disordered. 4 C2H2-type zinc fingers span residues 395 to 417 (FKCE…QRTH), 424 to 446 (LLCV…EIIH), 452 to 474 (FKCS…EMIH), and 480 to 503 (YVCS…RNYH).

As to expression, highly expressed at the 2-cell stage but its expression is rapidly turned off.

It is found in the nucleus. It localises to the chromosome. The protein localises to the telomere. Transcription factor required to regulate early development. Binds telomeres and plays a key role in genomic stability by regulating telomere elongation. Acts as an activator of spontaneous telomere sister chromatid exchange (T-SCE) and telomere elongation. In Mus musculus (Mouse), this protein is Zinc finger and SCAN domain containing protein 4D (Zscan4d).